We begin with the raw amino-acid sequence, 250 residues long: Thiamine thiazole synthase (250 aa).

NAD(+)-binding positions include Ser36, 55-56 (EE), Gly63, Val126, and 152-154 (HVD). The Fe cation site is built by Asp154 and His169. Residue Met216 participates in NAD(+) binding. Arg226 contacts glycine.

Belongs to the THI4 family. In terms of assembly, homooctamer; tetramer of dimers. The cofactor is Fe(2+).

It catalyses the reaction hydrogen sulfide + glycine + NAD(+) = ADP-5-ethyl-4-methylthiazole-2-carboxylate + nicotinamide + 3 H2O + H(+). The protein operates within cofactor biosynthesis; thiamine diphosphate biosynthesis. In terms of biological role, involved in the biosynthesis of the thiazole moiety of thiamine. Catalyzes the conversion of NAD and glycine to adenosine diphosphate 5-(2-hydroxyethyl)-4-methylthiazole-2-carboxylate (ADT), an adenylated thiazole intermediate, using free sulfide as a source of sulfur. The chain is Thiamine thiazole synthase from Thermotoga maritima (strain ATCC 43589 / DSM 3109 / JCM 10099 / NBRC 100826 / MSB8).